Here is a 117-residue protein sequence, read N- to C-terminus: Large ribosomal subunit protein uL18 (117 aa).

The protein belongs to the universal ribosomal protein uL18 family. As to quaternary structure, part of the 50S ribosomal subunit; part of the 5S rRNA/L5/L18/L25 subcomplex. Contacts the 5S and 23S rRNAs.

Functionally, this is one of the proteins that bind and probably mediate the attachment of the 5S RNA into the large ribosomal subunit, where it forms part of the central protuberance. This chain is Large ribosomal subunit protein uL18, found in Buchnera aphidicola subsp. Acyrthosiphon kondoi (Acyrthosiphon kondoi symbiotic bacterium).